Here is a 286-residue protein sequence, read N- to C-terminus: Cytosolic 5'-nucleotidase 3 (286 aa).

The Nucleophile role is filled by Asp38. Asp38 and Asp40 together coordinate Mg(2+). Asp40 functions as the Proton donor in the catalytic mechanism. Residues Glu85, Ser106, 153–154, and Lys202 each bind substrate; that span reads SA. Asp227 contributes to the Mg(2+) binding site.

It belongs to the pyrimidine 5'-nucleotidase family.

It localises to the cytoplasm. The catalysed reaction is a ribonucleoside 5'-phosphate + H2O = a ribonucleoside + phosphate. In terms of biological role, can act both as nucleotidase and as phosphotransferase. The sequence is that of Cytosolic 5'-nucleotidase 3 (nt5c3) from Danio rerio (Zebrafish).